A 744-amino-acid chain; its full sequence is Phosphoribosylformylglycinamidine synthase subunit PurL (744 aa).

The active site involves histidine 50. ATP is bound by residues tyrosine 53 and lysine 92. Glutamate 94 provides a ligand contact to Mg(2+). Residues 95–98 (SHNH) and arginine 117 contribute to the substrate site. The active-site Proton acceptor is the histidine 96. Aspartate 118 contacts Mg(2+). A substrate-binding site is contributed by glutamine 241. A Mg(2+)-binding site is contributed by aspartate 269. 313 to 315 (ESQ) lines the substrate pocket. ATP is bound by residues aspartate 494 and glycine 531. Asparagine 532 is a Mg(2+) binding site. Serine 534 lines the substrate pocket.

This sequence belongs to the FGAMS family. As to quaternary structure, monomer. Part of the FGAM synthase complex composed of 1 PurL, 1 PurQ and 2 PurS subunits.

It localises to the cytoplasm. The enzyme catalyses N(2)-formyl-N(1)-(5-phospho-beta-D-ribosyl)glycinamide + L-glutamine + ATP + H2O = 2-formamido-N(1)-(5-O-phospho-beta-D-ribosyl)acetamidine + L-glutamate + ADP + phosphate + H(+). It participates in purine metabolism; IMP biosynthesis via de novo pathway; 5-amino-1-(5-phospho-D-ribosyl)imidazole from N(2)-formyl-N(1)-(5-phospho-D-ribosyl)glycinamide: step 1/2. Its function is as follows. Part of the phosphoribosylformylglycinamidine synthase complex involved in the purines biosynthetic pathway. Catalyzes the ATP-dependent conversion of formylglycinamide ribonucleotide (FGAR) and glutamine to yield formylglycinamidine ribonucleotide (FGAM) and glutamate. The FGAM synthase complex is composed of three subunits. PurQ produces an ammonia molecule by converting glutamine to glutamate. PurL transfers the ammonia molecule to FGAR to form FGAM in an ATP-dependent manner. PurS interacts with PurQ and PurL and is thought to assist in the transfer of the ammonia molecule from PurQ to PurL. This is Phosphoribosylformylglycinamidine synthase subunit PurL from Chelativorans sp. (strain BNC1).